We begin with the raw amino-acid sequence, 261 residues long: tRNA U34 carboxymethyltransferase (261 aa).

Carboxy-S-adenosyl-L-methionine-binding positions include K25, W39, K44, G63, 114–115, Y135, and R250; that span reads VE.

The protein belongs to the class I-like SAM-binding methyltransferase superfamily. CmoB family. Homotetramer.

It catalyses the reaction carboxy-S-adenosyl-L-methionine + 5-hydroxyuridine(34) in tRNA = 5-carboxymethoxyuridine(34) in tRNA + S-adenosyl-L-homocysteine + H(+). Catalyzes carboxymethyl transfer from carboxy-S-adenosyl-L-methionine (Cx-SAM) to 5-hydroxyuridine (ho5U) to form 5-carboxymethoxyuridine (cmo5U) at position 34 in tRNAs. In Helicobacter pylori (strain G27), this protein is tRNA U34 carboxymethyltransferase.